The primary structure comprises 89 residues: Acyl carrier protein MbtL (89 aa).

Residues 8–83 (NHVSAELLGI…DLQAAIAAEP (76 aa)) enclose the Carrier domain. Position 43 is an O-(pantetheine 4'-phosphoryl)serine (S43).

In terms of processing, 4'-phosphopantetheine is transferred from CoA to a specific serine of apo-ACP, leading to the activated holo-ACP form.

Its subcellular location is the cytoplasm. It functions in the pathway siderophore biosynthesis; mycobactin biosynthesis. Acyl carrier protein involved in the formation of acyl-S-ACP intermediates within the mycobactin biosynthesis process. In Mycolicibacterium paratuberculosis (strain ATCC BAA-968 / K-10) (Mycobacterium paratuberculosis), this protein is Acyl carrier protein MbtL (mbtL).